A 155-amino-acid polypeptide reads, in one-letter code: MSHYEGDLRTPESARFAILASRWNARITDTLVAGARQSLAGNGIAEANIDVIRVPGAWELPLVAARLAAAHEHAAILTLGCVIRGDTRHYEHVADRCAEGLMRVQLDFGVPVLNGVLAVERAEDAEARAGGSHGNKGEEVALAALEMVNLLEQLP.

Residues tryptophan 23, 57-59 (AWE), and 81-83 (CVI) contribute to the 5-amino-6-(D-ribitylamino)uracil site. 86–87 (DT) serves as a coordination point for (2S)-2-hydroxy-3-oxobutyl phosphate. Histidine 89 acts as the Proton donor in catalysis. Asparagine 114 is a binding site for 5-amino-6-(D-ribitylamino)uracil. Arginine 128 contacts (2S)-2-hydroxy-3-oxobutyl phosphate.

This sequence belongs to the DMRL synthase family. In terms of assembly, forms an icosahedral capsid composed of 60 subunits, arranged as a dodecamer of pentamers.

The catalysed reaction is (2S)-2-hydroxy-3-oxobutyl phosphate + 5-amino-6-(D-ribitylamino)uracil = 6,7-dimethyl-8-(1-D-ribityl)lumazine + phosphate + 2 H2O + H(+). Its pathway is cofactor biosynthesis; riboflavin biosynthesis; riboflavin from 2-hydroxy-3-oxobutyl phosphate and 5-amino-6-(D-ribitylamino)uracil: step 1/2. Catalyzes the formation of 6,7-dimethyl-8-ribityllumazine by condensation of 5-amino-6-(D-ribitylamino)uracil with 3,4-dihydroxy-2-butanone 4-phosphate. This is the penultimate step in the biosynthesis of riboflavin. The chain is 6,7-dimethyl-8-ribityllumazine synthase from Stenotrophomonas maltophilia (strain R551-3).